Consider the following 206-residue polypeptide: 2-phospho-L-lactate guanylyltransferase (206 aa).

The protein belongs to the CofC family. In terms of assembly, homodimer.

The enzyme catalyses (2S)-2-phospholactate + GTP + H(+) = (2S)-lactyl-2-diphospho-5'-guanosine + diphosphate. It participates in cofactor biosynthesis; coenzyme F420 biosynthesis. In terms of biological role, guanylyltransferase that catalyzes the activation of (2S)-2-phospholactate (2-PL) as (2S)-lactyl-2-diphospho-5'-guanosine, via the condensation of 2-PL with GTP. It is involved in the biosynthesis of coenzyme F420, a hydride carrier cofactor. This is 2-phospho-L-lactate guanylyltransferase from Archaeoglobus profundus (strain DSM 5631 / JCM 9629 / NBRC 100127 / Av18).